A 475-amino-acid polypeptide reads, in one-letter code: MSPQTETKANVGFKAGVKDYKLTYYTPEYETLDTDILAAFRVSPQPGVPPEEAGAAVAAESSTGTWTTVWTDGLTSLDRYKGRCYHIEPVAGEENQYICYVAYPLDLFEEGSVTNMFTSIVGNVFGFKALRALRLEDLRIPVAYVKTFQGPPHGIQVERDKLNKYGRPLLGCTIKPKLGLSAKNYGRAVYEVLRGGLDFTKDDENVNSQPFMRWRDRFLFCAEALYKAQAETGEIKGHYLNATAGTCEDMMKRAVFARELGVPIVMHDYLTGGFTANTTLSHYCRDNGLLLHIHRAMHAVIDRQKNHGIHFRVLAKALRLSGGDHIHSGTVVGKLEGERDITLGFVDLLRDDYTEKDRSRGIYFSQSWVSTPGVLPVASGGIHVWHMPALTEIFGDDSVLQFGGGTLGHPWGNAPGAVANRVALEACVQARNEGRDLAREGNTIIREASKWSPELAAACEIWKEIKFEFPAMDTV.

A propeptide spanning residues Met1–Ser2 is cleaved from the precursor. Pro3 is modified (N-acetylproline). Lys14 is modified (N6,N6,N6-trimethyllysine). Positions 123 and 173 each coordinate substrate. Lys175 functions as the Proton acceptor in the catalytic mechanism. Lys177 is a substrate binding site. Mg(2+)-binding residues include Lys201, Asp203, and Glu204. Lys201 carries the N6-carboxylysine modification. Catalysis depends on His294, which acts as the Proton acceptor. The substrate site is built by Arg295, His327, and Ser379.

This sequence belongs to the RuBisCO large chain family. Type I subfamily. Heterohexadecamer of 8 large chains and 8 small chains; disulfide-linked. The disulfide link is formed within the large subunit homodimers. It depends on Mg(2+) as a cofactor. Post-translationally, the disulfide bond which can form in the large chain dimeric partners within the hexadecamer appears to be associated with oxidative stress and protein turnover.

It is found in the plastid. The protein localises to the chloroplast. The catalysed reaction is 2 (2R)-3-phosphoglycerate + 2 H(+) = D-ribulose 1,5-bisphosphate + CO2 + H2O. It catalyses the reaction D-ribulose 1,5-bisphosphate + O2 = 2-phosphoglycolate + (2R)-3-phosphoglycerate + 2 H(+). Functionally, ruBisCO catalyzes two reactions: the carboxylation of D-ribulose 1,5-bisphosphate, the primary event in carbon dioxide fixation, as well as the oxidative fragmentation of the pentose substrate in the photorespiration process. Both reactions occur simultaneously and in competition at the same active site. This chain is Ribulose bisphosphate carboxylase large chain, found in Atriplex rosea (Red orache).